Reading from the N-terminus, the 309-residue chain is Aurora kinase C (309 aa).

The interval 1 to 33 is disordered; sequence MSSPRAVVQLGKAQPAGEELATANQTAQQPSSP. The span at 22–32 shows a compositional bias: polar residues; sequence TANQTAQQPSS. The Protein kinase domain occupies 43–293; the sequence is FEIGRPLGKG…LAQILKHPWV (251 aa). Residues 49–57 and K72 contribute to the ATP site; that span reads LGKGKFGNV. The active-site Proton acceptor is D166. T198 carries the phosphothreonine; by PKA modification. Residues 292-309 form an interaction with BIRC5 region; the sequence is WVQAHSRRVLPPCAQMAS.

This sequence belongs to the protein kinase superfamily. Ser/Thr protein kinase family. Aurora subfamily. Component of the chromosomal passenger complex (CPC) composed of at least BIRC5/survivin, CDCA8/borealin, INCENP, AURKB or AURKC; predominantly independent AURKB- and AURKC-containing complexes exist; in the complex interacts directly with BIRC5/survivin and INCENP. Interacts with TACC1. In terms of tissue distribution, isoform 1 and isoform 2 are expressed in testis. Elevated expression levels were seen only in a subset of cancer cell lines such as Hep-G2, Huh-7 and HeLa. Expression is maximum at M phase.

The protein localises to the nucleus. It localises to the chromosome. The protein resides in the centromere. It is found in the cytoplasm. Its subcellular location is the cytoskeleton. The protein localises to the spindle. The catalysed reaction is L-seryl-[protein] + ATP = O-phospho-L-seryl-[protein] + ADP + H(+). The enzyme catalyses L-threonyl-[protein] + ATP = O-phospho-L-threonyl-[protein] + ADP + H(+). Okadaic acid, an inhibitor of protein phosphatase 1 (PP1), protein phosphatase 2A (PP2A) and protein phosphatase 5 (PP5), increases AURKC activity. AURKC is also stabilized through its interaction with INCENP, which also acts as an activator. In terms of biological role, serine/threonine-protein kinase component of the chromosomal passenger complex (CPC), a complex that acts as a key regulator of mitosis. The CPC complex has essential functions at the centromere in ensuring correct chromosome alignment and segregation and is required for chromatin-induced microtubule stabilization and spindle assembly. Also plays a role in meiosis and more particularly in spermatogenesis. Has redundant cellular functions with AURKB and can rescue an AURKB knockdown. Like AURKB, AURKC phosphorylates histone H3 at 'Ser-10' and 'Ser-28'. AURKC phosphorylates the CPC complex subunits BIRC5/survivin and INCENP leading to increased AURKC activity. Phosphorylates TACC1, another protein involved in cell division, at 'Ser-228'. The chain is Aurora kinase C (AURKC) from Homo sapiens (Human).